The chain runs to 115 residues: Photosystem II reaction center Psb28 protein (115 aa).

It belongs to the Psb28 family. Part of the photosystem II complex.

It localises to the plastid. Its subcellular location is the chloroplast thylakoid membrane. The polypeptide is Photosystem II reaction center Psb28 protein (Trieres chinensis (Marine centric diatom)).